The primary structure comprises 294 residues: uncharacterized protein (294 aa).

Positions 1–215 (MTTAITPDKK…DQDDDDQKDL (215 aa)) are disordered. 2 stretches are compositionally biased toward basic residues: residues 27–43 (TKPR…KSKK) and 50–78 (AKKR…KKAP). Residues 79 to 88 (MKAPSKPAAK) show a composition bias toward low complexity. The segment covering 92–102 (QQAQASLQKPI) has biased composition (polar residues). A compositionally biased stretch (pro residues) spans 118-136 (PRPPTPIPPTGVKPEPAPR). The segment covering 145–160 (SVSSTTPRTSATTGTT) has biased composition (low complexity).

This is an uncharacterized protein from Caenorhabditis elegans.